Reading from the N-terminus, the 344-residue chain is Arginine N-succinyltransferase (344 aa).

Residue L125 coordinates succinyl-CoA. The active-site Proton donor is H229.

The protein belongs to the arginine N-succinyltransferase family.

It catalyses the reaction succinyl-CoA + L-arginine = N(2)-succinyl-L-arginine + CoA + H(+). It participates in amino-acid degradation; L-arginine degradation via AST pathway; L-glutamate and succinate from L-arginine: step 1/5. Functionally, catalyzes the transfer of succinyl-CoA to arginine to produce N(2)-succinylarginine. This chain is Arginine N-succinyltransferase, found in Citrobacter koseri (strain ATCC BAA-895 / CDC 4225-83 / SGSC4696).